A 311-amino-acid chain; its full sequence is tRNA dimethylallyltransferase (311 aa).

An ATP-binding site is contributed by 13–20 (GPTASGKT). Residue 15-20 (TASGKT) participates in substrate binding. 2 interaction with substrate tRNA regions span residues 38–41 (DSMQ) and 166–170 (QRVLR).

It belongs to the IPP transferase family. Monomer. It depends on Mg(2+) as a cofactor.

It catalyses the reaction adenosine(37) in tRNA + dimethylallyl diphosphate = N(6)-dimethylallyladenosine(37) in tRNA + diphosphate. Catalyzes the transfer of a dimethylallyl group onto the adenine at position 37 in tRNAs that read codons beginning with uridine, leading to the formation of N6-(dimethylallyl)adenosine (i(6)A). This Staphylococcus aureus (strain Mu3 / ATCC 700698) protein is tRNA dimethylallyltransferase.